Here is a 463-residue protein sequence, read N- to C-terminus: Fibrinogen beta chain (463 aa).

The span at 1-12 (ASVEYDNEEDSP) shows a compositional bias: acidic residues. The disordered stretch occupies residues 1-56 (ASVEYDNEEDSPQIDARAHRPLDKRQEAAPTLRPVAPPISGTGYQPRPPKQDKQAM). Residue Tyr-5 is modified to Sulfotyrosine. The span at 16-27 (ARAHRPLDKRQE) shows a compositional bias: basic and acidic residues. Intrachain disulfides connect Cys-205–Cys-289 and Cys-215–Cys-244. A Fibrinogen C-terminal domain is found at 206–461 (NIPVVSGREC…KMSMKIKPYF (256 aa)). Asn-367 is a glycosylation site (N-linked (GlcNAc...) asparagine). Residues Asp-384, Asp-386, and Trp-388 each contribute to the Ca(2+) site. A disulfide bridge links Cys-397 with Cys-410.

In terms of assembly, heterohexamer; disulfide linked. Contains 2 sets of 3 non-identical chains (alpha, beta and gamma). The 2 heterotrimers are in head to head conformation with the N-termini in a small central domain. In terms of processing, conversion of fibrinogen to fibrin is triggered by thrombin, which cleaves fibrinopeptides A and B from alpha and beta chains, and thus exposes the N-terminal polymerization sites responsible for the formation of the soft clot. The soft clot is converted into the hard clot by factor XIIIA which catalyzes the epsilon-(gamma-glutamyl)lysine cross-linking between gamma chains (stronger) and between alpha chains (weaker) of different monomers.

Its subcellular location is the secreted. Cleaved by the protease thrombin to yield monomers which, together with fibrinogen alpha (FGA) and fibrinogen gamma (FGG), polymerize to form an insoluble fibrin matrix. Fibrin has a major function in hemostasis as one of the primary components of blood clots. This Gallus gallus (Chicken) protein is Fibrinogen beta chain (FGB).